The primary structure comprises 1708 residues: Rapamycin-insensitive companion of mTOR (1708 aa).

Residues 1 to 789 (MAAIGRGRSL…DKANLHALIQ (789 aa)) are interaction with NBN. Phosphoserine occurs at positions 21, 35, and 265. Lys-274 participates in a covalent cross-link: Glycyl lysine isopeptide (Lys-Gly) (interchain with G-Cter in ubiquitin). Positions 521 to 570 (LKDTEEALLINLRDSQVLQHKENLDWDWNLIGTILKWPNVNLRNYKDEQL) are ribosome-binding domain. Positions 543, 572, and 576 each coordinate ATP. The span at 1021–1043 (TLSLNSESTSSRHNSESESAPSS) shows a compositional bias: low complexity. The disordered stretch occupies residues 1021-1045 (TLSLNSESTSSRHNSESESAPSSMF). 2 positions are modified to N6-acetyllysine: Lys-1092 and Lys-1095. Disordered regions lie at residues 1101 to 1198 (SLTL…ENTS) and 1218 to 1247 (SFNT…PTAM). Residue Thr-1103 is modified to Phosphothreonine. Residues Lys-1116, Lys-1119, and Lys-1125 each carry the N6-acetyllysine modification. A Phosphothreonine; by RPS6KB1 modification is found at Thr-1135. Position 1138 is a phosphoserine (Ser-1138). Polar residues predominate over residues 1147–1158 (FTSSSAQKSLQL). Residues Ser-1161, Ser-1218, and Ser-1234 each carry the phosphoserine modification. Over residues 1221 to 1239 (TDTTTSGISSMSSSPSRET) the composition is skewed to low complexity. Position 1270 is a phosphothreonine (Thr-1270). Phosphoserine is present on residues Ser-1273, Ser-1277, Ser-1281, and Ser-1283. Thr-1294 is subject to Phosphothreonine. Ser-1301 and Ser-1312 each carry phosphoserine. The residue at position 1331 (Thr-1331) is a Phosphothreonine. Residues Ser-1345 and Ser-1352 each carry the phosphoserine modification. At Thr-1375 the chain carries Phosphothreonine. Phosphoserine is present on Ser-1384. Tyr-1385 carries the post-translational modification Phosphotyrosine. Phosphoserine occurs at positions 1387, 1395, and 1410. 3 residues coordinate Zn(2+): His-1514, Cys-1519, and Cys-1522. A phosphoserine mark is found at Ser-1570, Ser-1573, Ser-1576, and Ser-1591. Cys-1651 provides a ligand contact to Zn(2+).

The protein belongs to the RICTOR family. In terms of assembly, component of the mechanistic target of rapamycin complex 2 (mTORC2), consisting in two heterotretramers composed of MTOR, MLST8, RICTOR and MAPKAP1/SIN1. The mTORC2 core complex associates with PRR5/PROTOR1 and/or PRR5L/PROTOR2. Contrary to mTORC1, mTORC2 does not bind to and is not sensitive to FKBP12-rapamycin. Binds directly to MTOR and PRR5 within the TORC2 complex; interaction with MTOR is enhanced by deubiquitination of RICTOR by USP9X. Interaction with MAPKAP1 is not enhanced by RICTOR deubiquitination by USP9X. Interacts with CCDC28B. Interacts with NBN. Interacts with SIK3. Interacts with NCKAP1L. Interacts with ARMH4 (via cytoplasmic tail); this interaction bridges ARMH4 to the mTORC2 complex and inhibits the mTORC2 kinase activity. Interacts with UBXN2A. Interacts with TSPAN8. Post-translationally, phosphorylated by MTOR; when part of mTORC2. Phosphorylated at Thr-1135 by RPS6KB1 downstream of the mTORC1 complex: phosphorylation of RICTOR inhibits mTORC2 signaling by creating a binding site for 14-3-3 proteins. Phosphorylated at Ser-1234 by GSK3B in response to endoplasmic stress, inhibiting mTORC2 signaling. In terms of processing, ubiquitinated by the SCF(FBXW7) complex, leading to its degradation by the proteasome. Deubiquitinated by USP9X; deubiquitination stabilizes RICTOR and enhances its binding to MTOR, thus promoting mTORC2 complex assembly. Acetylated by EP300/p300 in response to glucose, leading to activate the mTORC2 complex. Acetylation by BLOC1S1/GCN5L1 in response to hypotoxic stress protects RICTOR against ubiquitination and subsequent degradation by the proteasome. Highest levels in liver and brain with expression also detected in heart, muscle, spleen and kidney (at protein level).

It is found in the cell membrane. The protein resides in the endoplasmic reticulum membrane. The protein localises to the lysosome membrane. Its function is as follows. Component of the mechanistic target of rapamycin complex 2 (mTORC2), which transduces signals from growth factors to pathways involved in proliferation, cytoskeletal organization, lipogenesis and anabolic output. In response to growth factors, mTORC2 phosphorylates and activates AGC protein kinase family members, including AKT (AKT1, AKT2 and AKT3), PKC (PRKCA, PRKCB and PRKCE) and SGK1. In contrast to mTORC1, mTORC2 is nutrient-insensitive. Within the mTORC2 complex, RICTOR probably acts as a molecular adapter. RICTOR is responsible for the FKBP12-rapamycin-insensitivity of mTORC2. mTORC2 plays a critical role in AKT1 activation by mediating phosphorylation of different sites depending on the context, such as 'Thr-450', 'Ser-473', 'Ser-477' or 'Thr-479', facilitating the phosphorylation of the activation loop of AKT1 on 'Thr-308' by PDPK1/PDK1 which is a prerequisite for full activation. mTORC2 catalyzes the phosphorylation of SGK1 at 'Ser-422' and of PRKCA on 'Ser-657'. The mTORC2 complex also phosphorylates various proteins involved in insulin signaling, such as FBXW8 and IGF2BP1. mTORC2 acts upstream of Rho GTPases to regulate the actin cytoskeleton, probably by activating one or more Rho-type guanine nucleotide exchange factors. mTORC2 promotes the serum-induced formation of stress-fibers or F-actin. Plays an essential role in embryonic growth and development. The polypeptide is Rapamycin-insensitive companion of mTOR (Mus musculus (Mouse)).